The primary structure comprises 583 residues: MDLMNGQASSVNIAATASEKSSSSESLSDKGSELKKSFDAVVFDVLKVTPEEYAGQITLMDVPVFKAIQPDELSSCGWNKKEKYSSAPNAVAFTRRFNHVSFWVVREILHAQTLKIRAEVLSHYIKTAKKLYELNNLHALMAVVSGLQSAPIFRLTKTWALLSRKDKTTFEKLEYVMSKEDNYKRLRDYISSLKMTPCIPYLGIYLSDLTYIDSAYPSTGSILENEQRSNLMNNILRIISDLQQSCEYDIPMLPHVQKYLNSVQYIEELQKFVEDDNYKLSLKIEPGTSTPRSAASREDLVGPEVGASPQSGRKSVAAEGALLPQTPPSPRNLIPHGHRKCHSLGYNFIHKMNTAEFKSATFPNAGPRHLLDDSVMEPHAPSRGQAESSTLSSGISIGSSDGSELSEETSWPAFERNRLYHSLGPVTRVARNGYRSHMKASSSAESEDLAVHLYPGAVTIQGVLRRKTLLKEGKKPTVASWTKYWAALCGTQLFYYAAKSLKATERKHFKSTSNKNVSVIGWMVMMADDPEHPDLFLLTDSEKGNSYKFQAGNRMNAMLWFKHLSAACQSNKQQVPTNLMTFE.

Residues 49 to 287 (TPEEYAGQIT…YKLSLKIEPG (239 aa)) enclose the Ras-GEF domain. The disordered stretch occupies residues 283–314 (KIEPGTSTPRSAASREDLVGPEVGASPQSGRK). A phosphoserine mark is found at Ser-293, Ser-296, Ser-308, and Ser-311. The PXXP motif lies at 324-327 (PQTP). The residue at position 326 (Thr-326) is a Phosphothreonine. 2 positions are modified to phosphoserine: Ser-329 and Ser-343. Thr-361 is subject to Phosphothreonine. Residues 372 to 406 (DDSVMEPHAPSRGQAESSTLSSGISIGSSDGSELS) are disordered. At Ser-374 the chain carries Phosphoserine. The span at 387 to 403 (ESSTLSSGISIGSSDGS) shows a compositional bias: low complexity. Ser-422 carries the phosphoserine modification. Residues 457–569 (AVTIQGVLRR…WFKHLSAACQ (113 aa)) form the PH domain. The required for stimulation of nucleotide exchange by RALA stretch occupies residues 459 to 583 (TIQGVLRRKT…QVPTNLMTFE (125 aa)).

Interacts with the SH3 domains of GRB2 and PLCG1. Interacts with RALA.

Its subcellular location is the cytoplasm. The protein localises to the cell membrane. Its function is as follows. Guanine nucleotide exchange factor for the small GTPase RALA. May be involved in cytoskeletal organization. May also be involved in the stimulation of transcription in a Ras-independent fashion. This chain is Ras-specific guanine nucleotide-releasing factor RalGPS2 (RALGPS2), found in Homo sapiens (Human).